The chain runs to 397 residues: Elongation factor Tu (397 aa).

In terms of domain architecture, tr-type G spans 10–207 (KPHVNIGTIG…AVDTYIEEPK (198 aa)). The G1 stretch occupies residues 19 to 26 (GHVDHGKT). 19 to 26 (GHVDHGKT) contacts GTP. Thr26 lines the Mg(2+) pocket. A G2 region spans residues 60 to 64 (GITIN). Positions 81 to 84 (DCPG) are G3. GTP is bound by residues 81–85 (DCPGH) and 136–139 (NKID). The tract at residues 136–139 (NKID) is G4. Positions 177-179 (SAL) are G5.

This sequence belongs to the TRAFAC class translation factor GTPase superfamily. Classic translation factor GTPase family. EF-Tu/EF-1A subfamily. As to quaternary structure, monomer.

The protein localises to the cytoplasm. It carries out the reaction GTP + H2O = GDP + phosphate + H(+). Its function is as follows. GTP hydrolase that promotes the GTP-dependent binding of aminoacyl-tRNA to the A-site of ribosomes during protein biosynthesis. This Metamycoplasma hominis (strain ATCC 23114 / DSM 25592 / NBRC 14850 / NCTC 10111 / PG21) (Mycoplasma hominis) protein is Elongation factor Tu.